A 118-amino-acid polypeptide reads, in one-letter code: Large ribosomal subunit protein bL21c (118 aa).

Belongs to the bacterial ribosomal protein bL21 family. Part of the 50S ribosomal subunit.

It is found in the plastid. The protein localises to the chloroplast. Its function is as follows. This protein binds to 23S rRNA. This Zygnema circumcarinatum (Green alga) protein is Large ribosomal subunit protein bL21c.